Reading from the N-terminus, the 186-residue chain is MARRPVDIPIPASPVQPFPILTEYVDIVAGFGRGSAELGIPTANVPIEQLPSEVNEMATGVYFGWARLRPNMDQEAQVHHRNDGSEVIYNFGSKLSETERGVFPIVLSVGWNPFYNNSKKTVELHILNDFEEDFYGAKIKFSFLGYIRPELNYTTKEALIEDIHTDIKIASEVLHTEPYSSLKNQL.

Residues Thr-42 and Asn-44 each contribute to the Mg(2+) site. Glu-123 serves as the catalytic Nucleophile.

The protein belongs to the flavokinase family. Zn(2+) serves as cofactor. The cofactor is Mg(2+).

The enzyme catalyses riboflavin + ATP = FMN + ADP + H(+). Its pathway is cofactor biosynthesis; FMN biosynthesis; FMN from riboflavin (ATP route): step 1/1. Its function is as follows. Catalyzes the phosphorylation of riboflavin (vitamin B2) to form flavin mononucleotide (FMN) coenzyme. In Eremothecium gossypii (strain ATCC 10895 / CBS 109.51 / FGSC 9923 / NRRL Y-1056) (Yeast), this protein is Riboflavin kinase (FMN1).